We begin with the raw amino-acid sequence, 213 residues long: Large ribosomal subunit protein uL3 (213 aa).

Position 151 is an N5-methylglutamine (Q151).

The protein belongs to the universal ribosomal protein uL3 family. Part of the 50S ribosomal subunit. Forms a cluster with proteins L14 and L19. Post-translationally, methylated by PrmB.

One of the primary rRNA binding proteins, it binds directly near the 3'-end of the 23S rRNA, where it nucleates assembly of the 50S subunit. The chain is Large ribosomal subunit protein uL3 from Rhizobium etli (strain ATCC 51251 / DSM 11541 / JCM 21823 / NBRC 15573 / CFN 42).